A 253-amino-acid chain; its full sequence is Imidazole glycerol phosphate synthase subunit HisF (253 aa).

Catalysis depends on residues Asp11 and Asp130.

Belongs to the HisA/HisF family. Heterodimer of HisH and HisF.

It is found in the cytoplasm. It catalyses the reaction 5-[(5-phospho-1-deoxy-D-ribulos-1-ylimino)methylamino]-1-(5-phospho-beta-D-ribosyl)imidazole-4-carboxamide + L-glutamine = D-erythro-1-(imidazol-4-yl)glycerol 3-phosphate + 5-amino-1-(5-phospho-beta-D-ribosyl)imidazole-4-carboxamide + L-glutamate + H(+). The protein operates within amino-acid biosynthesis; L-histidine biosynthesis; L-histidine from 5-phospho-alpha-D-ribose 1-diphosphate: step 5/9. IGPS catalyzes the conversion of PRFAR and glutamine to IGP, AICAR and glutamate. The HisF subunit catalyzes the cyclization activity that produces IGP and AICAR from PRFAR using the ammonia provided by the HisH subunit. This Roseobacter denitrificans (strain ATCC 33942 / OCh 114) (Erythrobacter sp. (strain OCh 114)) protein is Imidazole glycerol phosphate synthase subunit HisF.